We begin with the raw amino-acid sequence, 266 residues long: Enterotoxin type C-3 (266 aa).

An N-terminal signal peptide occupies residues 1–27; sequence MYKRLFISRVILIFALILVISTPNVLA. Zn(2+) is bound by residues Asp-36 and Asp-110. A disulfide bond links Cys-120 and Cys-137. Zn(2+) is bound by residues His-145 and His-149.

The protein belongs to the staphylococcal/streptococcal toxin family. In terms of assembly, interacts with MHC class II molecules composed of alpha/HLA-DRA and beta/HLA-DRB1 chains. Interacts with host T-cell receptor/TCR beta variable chain TRBV8-2.

Its subcellular location is the secreted. Staphylococcal enterotoxin that activates the host immune system by binding as unprocessed molecules to major histocompatibility (MHC) complex class II and T-cell receptor (TCR) molecules. In turn, this ternary complex activates a large number of T-lymphocytes initiating a systemic release of pro-inflammatory cytokines. Also causes the intoxication staphylococcal food poisoning syndrome. The sequence is that of Enterotoxin type C-3 (entC3) from Staphylococcus aureus.